Consider the following 638-residue polypeptide: Homeobox protein 10 (638 aa).

3 disordered regions span residues 23-55 (ETQP…LNTN), 76-139 (TDEN…VNTN), and 195-219 (IANE…EEAK). Low complexity-rich tracts occupy residues 24–55 (TQPT…LNTN) and 80–139 (NTSV…VNTN). A compositionally biased stretch (polar residues) spans 205-214 (EPQTNSNVNG). The segment at residues 301 to 360 (NKKKRQRTSPEQLAILEQIFETDKMPSQQIRVRLANQLGMSSRRVQIWFQNKRAKVKRGG) is a DNA-binding region (homeobox). Disordered stretches follow at residues 381–431 (EDED…TSSD) and 448–638 (SSSS…IVKN). Low complexity-rich tracts occupy residues 388 to 411 (SLTI…NNNG), 419 to 430 (LSSSPTNLNTSS), and 462 to 501 (NNTN…TTTT). Polar residues-rich tracts occupy residues 502–522 (SSSP…NKLT) and 545–573 (SLNS…TDKQ). Residues 575–625 (NSDFSNFNNNNNNNNNNNNNNNNNNNINNNGNNNSNNNDSNNNNNKSNFSD) show a composition bias toward low complexity.

Its subcellular location is the nucleus. Putative transcription factor. The protein is Homeobox protein 10 (hbx10) of Dictyostelium discoideum (Social amoeba).